A 281-amino-acid chain; its full sequence is Pantothenate synthetase (281 aa).

30 to 37 (MGYLHDGH) provides a ligand contact to ATP. Catalysis depends on histidine 37, which acts as the Proton donor. Glutamine 61 serves as a coordination point for (R)-pantoate. Residue glutamine 61 participates in beta-alanine binding. ATP is bound at residue 147–150 (GEKD). A (R)-pantoate-binding site is contributed by glutamine 153. Residues isoleucine 176 and 184–187 (KSSR) contribute to the ATP site.

The protein belongs to the pantothenate synthetase family. Homodimer.

The protein localises to the cytoplasm. The catalysed reaction is (R)-pantoate + beta-alanine + ATP = (R)-pantothenate + AMP + diphosphate + H(+). The protein operates within cofactor biosynthesis; (R)-pantothenate biosynthesis; (R)-pantothenate from (R)-pantoate and beta-alanine: step 1/1. Catalyzes the condensation of pantoate with beta-alanine in an ATP-dependent reaction via a pantoyl-adenylate intermediate. The protein is Pantothenate synthetase of Clostridium acetobutylicum (strain ATCC 824 / DSM 792 / JCM 1419 / IAM 19013 / LMG 5710 / NBRC 13948 / NRRL B-527 / VKM B-1787 / 2291 / W).